The sequence spans 76 residues: Sec-independent protein translocase protein TatA (76 aa).

The helical transmembrane segment at 1 to 21 threads the bilayer; that stretch reads MGGLSIWHWLIVLLIVALVFG. The segment at 43 to 76 is disordered; the sequence is MKEGEAPADAQQLPRSGSVDVNAKETTRSDSNKA. The span at 64–76 shows a compositional bias: basic and acidic residues; that stretch reads NAKETTRSDSNKA.

Belongs to the TatA/E family. As to quaternary structure, the Tat system comprises two distinct complexes: a TatABC complex, containing multiple copies of TatA, TatB and TatC subunits, and a separate TatA complex, containing only TatA subunits. Substrates initially bind to the TatABC complex, which probably triggers association of the separate TatA complex to form the active translocon.

It localises to the cell inner membrane. Part of the twin-arginine translocation (Tat) system that transports large folded proteins containing a characteristic twin-arginine motif in their signal peptide across membranes. TatA could form the protein-conducting channel of the Tat system. The protein is Sec-independent protein translocase protein TatA of Burkholderia lata (strain ATCC 17760 / DSM 23089 / LMG 22485 / NCIMB 9086 / R18194 / 383).